We begin with the raw amino-acid sequence, 152 residues long: Transcriptional regulator MraZ (152 aa).

2 SpoVT-AbrB domains span residues 5-52 (ASAI…PLKE) and 81-124 (ATEC…SDAE).

It belongs to the MraZ family. As to quaternary structure, forms oligomers.

The protein resides in the cytoplasm. It localises to the nucleoid. The chain is Transcriptional regulator MraZ from Pasteurella multocida (strain Pm70).